The primary structure comprises 101 residues: Protein translation factor SUI1 homolog (101 aa).

Belongs to the SUI1 family.

The sequence is that of Protein translation factor SUI1 homolog from Methanothermobacter thermautotrophicus (strain ATCC 29096 / DSM 1053 / JCM 10044 / NBRC 100330 / Delta H) (Methanobacterium thermoautotrophicum).